Reading from the N-terminus, the 135-residue chain is UPF0299 membrane protein YE2790 (135 aa).

4 consecutive transmembrane segments (helical) span residues 4–24 (VTSLGWQYLRAFVIIYLCLWA), 30–50 (LLLPISIPGSILGMLILFALL), 63–83 (GCHLLIRYMALLFVPIGVGVM), and 93–113 (FGPIVVSCFVSTLVVMLVVGY).

The protein belongs to the UPF0299 family.

The protein localises to the cell inner membrane. In Yersinia enterocolitica serotype O:8 / biotype 1B (strain NCTC 13174 / 8081), this protein is UPF0299 membrane protein YE2790.